A 47-amino-acid chain; its full sequence is FLSVTEPSLLGDGGDLEIRVFISDDFDGELFPRGVVDSDDLPLNVSR.

Residue Arg47 participates in ATP binding.

This sequence belongs to the heat shock protein 90 family. Homodimer.

The protein localises to the cytoplasm. Putative molecular chaperone that may promote the maturation, structural maintenance and proper regulation of specific target proteins. The polypeptide is Putative heat shock protein HSP90 (Populus euphratica (Euphrates poplar)).